Here is a 125-residue protein sequence, read N- to C-terminus: Small ribosomal subunit protein uS12 (125 aa).

The interval 1–24 (MPTISQLVRKPRKAKRTKSKVPAL) is disordered. Basic residues predominate over residues 9 to 19 (RKPRKAKRTKS). Asp89 bears the 3-methylthioaspartic acid mark. Positions 101 to 125 (SLDTAGVKDRKQARSKYGSKRPKSA) are disordered. The segment covering 113-125 (ARSKYGSKRPKSA) has biased composition (basic residues).

The protein belongs to the universal ribosomal protein uS12 family. As to quaternary structure, part of the 30S ribosomal subunit. Contacts proteins S8 and S17. May interact with IF1 in the 30S initiation complex.

With S4 and S5 plays an important role in translational accuracy. Its function is as follows. Interacts with and stabilizes bases of the 16S rRNA that are involved in tRNA selection in the A site and with the mRNA backbone. Located at the interface of the 30S and 50S subunits, it traverses the body of the 30S subunit contacting proteins on the other side and probably holding the rRNA structure together. The combined cluster of proteins S8, S12 and S17 appears to hold together the shoulder and platform of the 30S subunit. The protein is Small ribosomal subunit protein uS12 of Nitrosomonas europaea (strain ATCC 19718 / CIP 103999 / KCTC 2705 / NBRC 14298).